Consider the following 439-residue polypeptide: Histidine--tRNA ligase (439 aa).

This sequence belongs to the class-II aminoacyl-tRNA synthetase family. In terms of assembly, homodimer.

Its subcellular location is the cytoplasm. It catalyses the reaction tRNA(His) + L-histidine + ATP = L-histidyl-tRNA(His) + AMP + diphosphate + H(+). The polypeptide is Histidine--tRNA ligase (Leptospira borgpetersenii serovar Hardjo-bovis (strain L550)).